Reading from the N-terminus, the 264-residue chain is TLC domain-containing protein 2 (264 aa).

Helical transmembrane passes span 3 to 23 (PTGLLVAGASFLAFRGLHWGL), 42 to 62 (LCVSLAHSLLSGTGALLGLSL), 77 to 97 (WALVLVAVSVGYFLADGADLL), 114 to 134 (VVVSCLSTAVLSGHYVGFSMV), 169 to 189 (SLATLALFRLVPLGWMSLWLF), and 199 to 219 (LVTLGGIGLVTVGIMSIILGI). One can recognise a TLC domain in the interval 34 to 227 (RDRWQWWNLC…GIRILVNDVL (194 aa)). Residues 230-264 (RPHPPSPGHEKTRGTRTRRDNGPVTSNSSTLSLKD) are disordered. Residues 237–250 (GHEKTRGTRTRRDN) show a composition bias toward basic and acidic residues. Residues 252-264 (PVTSNSSTLSLKD) show a composition bias toward polar residues.

It belongs to the TLCD family.

Its subcellular location is the cell membrane. In terms of biological role, regulates the composition and fluidity of the plasma membrane. Inhibits the incorporation of membrane-fluidizing phospholipids containing omega-3 long-chain polyunsaturated fatty acids (LCPUFA) and thereby promotes membrane rigidity. Does not appear to have any effect on LCPUFA synthesis. The sequence is that of TLC domain-containing protein 2 (TLCD2) from Homo sapiens (Human).